The following is a 171-amino-acid chain: Large ribosomal subunit protein bL9 (171 aa).

This sequence belongs to the bacterial ribosomal protein bL9 family.

In terms of biological role, binds to the 23S rRNA. This chain is Large ribosomal subunit protein bL9, found in Rickettsia canadensis (strain McKiel).